The chain runs to 453 residues: tRNA modification GTPase MnmE (453 aa).

Residues Arg22, Glu79, and Lys119 each contribute to the (6S)-5-formyl-5,6,7,8-tetrahydrofolate site. One can recognise a TrmE-type G domain in the interval 215-376 (GMKVVIAGRP…LREHLKACMG (162 aa)). Position 225 (Asn225) interacts with K(+). Residues 225–230 (NAGKSS), 244–250 (TEIAGTT), 269–272 (DTAG), and 334–337 (NKAD) each bind GTP. Ser229 contacts Mg(2+). Positions 244, 246, and 249 each coordinate K(+). A Mg(2+)-binding site is contributed by Thr250. Lys453 is a binding site for (6S)-5-formyl-5,6,7,8-tetrahydrofolate.

It belongs to the TRAFAC class TrmE-Era-EngA-EngB-Septin-like GTPase superfamily. TrmE GTPase family. As to quaternary structure, homodimer. Heterotetramer of two MnmE and two MnmG subunits. K(+) is required as a cofactor.

The protein localises to the cytoplasm. Functionally, exhibits a very high intrinsic GTPase hydrolysis rate. Involved in the addition of a carboxymethylaminomethyl (cmnm) group at the wobble position (U34) of certain tRNAs, forming tRNA-cmnm(5)s(2)U34. This chain is tRNA modification GTPase MnmE, found in Aeromonas salmonicida (strain A449).